A 404-amino-acid polypeptide reads, in one-letter code: Probable tRNA sulfurtransferase (404 aa).

One can recognise a THUMP domain in the interval 60-165 (HEVAESLKEI…DEAAYISYED (106 aa)). ATP-binding positions include 183-184 (ML), 208-209 (HF), arginine 265, glycine 287, and glutamine 296.

The protein belongs to the ThiI family.

The protein localises to the cytoplasm. The catalysed reaction is [ThiI sulfur-carrier protein]-S-sulfanyl-L-cysteine + a uridine in tRNA + 2 reduced [2Fe-2S]-[ferredoxin] + ATP + H(+) = [ThiI sulfur-carrier protein]-L-cysteine + a 4-thiouridine in tRNA + 2 oxidized [2Fe-2S]-[ferredoxin] + AMP + diphosphate. The enzyme catalyses [ThiS sulfur-carrier protein]-C-terminal Gly-Gly-AMP + S-sulfanyl-L-cysteinyl-[cysteine desulfurase] + AH2 = [ThiS sulfur-carrier protein]-C-terminal-Gly-aminoethanethioate + L-cysteinyl-[cysteine desulfurase] + A + AMP + 2 H(+). Its pathway is cofactor biosynthesis; thiamine diphosphate biosynthesis. Functionally, catalyzes the ATP-dependent transfer of a sulfur to tRNA to produce 4-thiouridine in position 8 of tRNAs, which functions as a near-UV photosensor. Also catalyzes the transfer of sulfur to the sulfur carrier protein ThiS, forming ThiS-thiocarboxylate. This is a step in the synthesis of thiazole, in the thiamine biosynthesis pathway. The sulfur is donated as persulfide by IscS. The sequence is that of Probable tRNA sulfurtransferase from Streptococcus agalactiae serotype V (strain ATCC BAA-611 / 2603 V/R).